Reading from the N-terminus, the 268-residue chain is MVETLLEVRNLSKTFRYRTGWFRRQTVDAVKPLSFTLRERQTLAIIGENGSGKSTLAKMLAGMIEPTSGELLIDDHPLHYGDYSFRSQRIRMIFQDPSTSLNPRQRISQILDFPLRLNTDLEPEQRRKQIVETMRMVGLLPDHVSYYPHMLAPGQKQRLGLARALILRPKVIIADEALASLDMSMRSQLINLMLELQEKQGISYIYVTQHIGMMKHISDQVLVMHQGEVVERGSTADVLASPLHELTRRLIAGHFGEALTADAWRKDR.

One can recognise an ABC transporter domain in the interval 6–251 (LEVRNLSKTF…PLHELTRRLI (246 aa)). 47–54 (GENGSGKS) lines the ATP pocket.

It belongs to the ABC transporter superfamily.

The protein resides in the cell inner membrane. In terms of biological role, involved in a peptide intake transport system that plays a role in the resistance to antimicrobial peptides. This Salmonella typhimurium (strain LT2 / SGSC1412 / ATCC 700720) protein is Peptide transport system ATP-binding protein SapF.